A 361-amino-acid polypeptide reads, in one-letter code: Protein RecA (361 aa).

Residue glycine 77–threonine 84 coordinates ATP.

Belongs to the RecA family.

The protein resides in the cytoplasm. In terms of biological role, can catalyze the hydrolysis of ATP in the presence of single-stranded DNA, the ATP-dependent uptake of single-stranded DNA by duplex DNA, and the ATP-dependent hybridization of homologous single-stranded DNAs. It interacts with LexA causing its activation and leading to its autocatalytic cleavage. This chain is Protein RecA, found in Sinorhizobium fredii (strain NBRC 101917 / NGR234).